We begin with the raw amino-acid sequence, 283 residues long: Pantothenate synthetase (283 aa).

30 to 37 (MGNLHDGH) is an ATP binding site. The Proton donor role is filled by His37. Gln61 is a binding site for (R)-pantoate. Position 61 (Gln61) interacts with beta-alanine. 149 to 152 (GEKD) serves as a coordination point for ATP. Gln155 provides a ligand contact to (R)-pantoate. Position 186-189 (186-189 (LSSR)) interacts with ATP.

It belongs to the pantothenate synthetase family. In terms of assembly, homodimer.

Its subcellular location is the cytoplasm. It carries out the reaction (R)-pantoate + beta-alanine + ATP = (R)-pantothenate + AMP + diphosphate + H(+). The protein operates within cofactor biosynthesis; (R)-pantothenate biosynthesis; (R)-pantothenate from (R)-pantoate and beta-alanine: step 1/1. Functionally, catalyzes the condensation of pantoate with beta-alanine in an ATP-dependent reaction via a pantoyl-adenylate intermediate. This chain is Pantothenate synthetase, found in Escherichia coli O157:H7.